Reading from the N-terminus, the 160-residue chain is MSSINPSLYNDNGVYCSKVIVTKAIKIRDLDQIPQTVLALAATNNGANYDYASPNYITNARKRFKARLNRNPIWYPKMGDTAAIFFARSDQAGWDIRAEVDEAILYTQKQYPHIDINYAVLTPVNTHDLVDMNLIAQLFAEDDAAAAAAANQPNQPNQGQ.

Repeat copies occupy residues Asn151–Pro153, Asn154–Pro156, and Asn157–Gly159. Positions Asn151–Gly159 are 3 X 3 AA tandem repeats of N-Q-[PG].

Its function is as follows. Unknown. Its expression during growth is not required for growth but for the proper initiation of development, therefore playing a role in the transition from growth to development. This Dictyostelium discoideum (Social amoeba) protein is Vegetative-specific protein V4 (lmcB).